We begin with the raw amino-acid sequence, 374 residues long: Potassium channel subfamily K member 9 (374 aa).

Topologically, residues 1 to 8 (MKRQNVRT) are cytoplasmic. A helical transmembrane segment spans residues 9-29 (LSLIICTFTYLLVGAAVFDAL). At 30–88 (ESDYEMREEEKLKAEEIRLKGKYNISSEDYRQLELVIMQSEPHRAGVQWKFAGSFYFAI) the chain is on the extracellular side. An N-linked (GlcNAc...) asparagine glycan is attached at Asn53. The pore-forming intramembrane region spans 89-101 (TVITTIGYGHAAP). The Extracellular segment spans residues 102 to 107 (GTDAGK). A helical transmembrane segment spans residues 108–128 (AFCMFYAVLGIPLTLVMFQSL). At 129 to 158 (GERMNTFVKYLLKRIKKCCGMHSTDVSMEN) the chain is on the cytoplasmic side. Residues 159 to 179 (MVTVGFFSCMGTLCIGAAAFS) traverse the membrane as a helical segment. Residues 180–194 (HYEEWSFFQAYYYCF) are Extracellular-facing. The segment at residues 195–207 (ITLTTIGFGDYVA) is an intramembrane region (pore-forming). Residues 208-218 (LQKNRALQKKP) are Extracellular-facing. A helical transmembrane segment spans residues 219 to 239 (LYVAFSFMYILVGLTVIGAFL). The Cytoplasmic segment spans residues 240–374 (NLVVLRFLTM…HRLMKRRKSI (135 aa)).

The protein belongs to the two pore domain potassium channel (TC 1.A.1.8) family. Homodimer. May form heterodimers with other family members.

The protein localises to the cell membrane. Its function is as follows. pH-dependent, voltage-insensitive, background potassium channel protein. The chain is Potassium channel subfamily K member 9 (kcnk9) from Xenopus laevis (African clawed frog).